The following is an 844-amino-acid chain: MAAFSQYPLSTGWSFKDSDDQSPEAWMPVPVVPSVAHQDLQANQKLKNPYIGFNELDARWVNDKSWTYRTVFQKPAVAAGSSIILAFDGLDTFATVKLDGSVILQSDNMFLAHRVDVTKALEAEGDHVLEIDFDCAMRRARELREKDTKHNWASFNGDPARMAVRKAQYHWGWDWGPLLSTAGIWREVRLEVYSAKISDLWTEVELASDHQTARVSAFTEVDAADSVDSYKASFLLSLHGKEVAREVATLKDKVAKVTFDVTQPSLWWPNGYGDPALYEISVSLEKEDCEIHSVSKKIGIRTAELIQQPDRHGKSFFFRINGVDVFCGGSCWIPADNLLPSITAERYRKWIELMVAGRQVMIRVWGGGCYEDDSFYQACDELGVLVWQDFMFGCGNYPTWPELLESIEKEANYNVRRLRHHPSIVVYVGNNEDYQVQESAGLVYDYEDKNPENWLKTDFPARYIYEKLLPSVVEKLSPKTVYHPGSPWGDGKITSDPTVGDMHQWNVWHGTQEKYQIFDTLGGRFNSEFGMEAFPHMSTIEYFVENEADKYPQSHVLDFHNKADGHERRIATYLVENLRTATDLETYVYLTQVVQAETMMFGYRGWRRQWGDERHCGGALLWQLNDCWPTISWAIVDYFLRPKPAFYAVARVLKPIAVGVRREHHDWSVTHAQPPKTSKYELWIASSLQKETVGTIELRFLSVNTGLDVRAPILRDNVKIVPNGTTNILEGVINHKAQPEPHVLAARLWVDGEVTARDVDWPQPFKYLDLSDRGLEVNKVSESGNEQKLLITAKKPVKCLVFEERDGIRVSDSAMDIVPGDGQTVTVTGLKAGDAPLKYKYLGQ.

Catalysis depends on Glu-432, which acts as the Proton donor. The N-linked (GlcNAc...) asparagine glycan is linked to Asn-723.

It belongs to the glycosyl hydrolase 2 family. Beta-mannosidase B subfamily.

The catalysed reaction is Hydrolysis of terminal, non-reducing beta-D-mannose residues in beta-D-mannosides.. It functions in the pathway glycan metabolism; N-glycan degradation. Functionally, exoglycosidase that cleaves the single beta-linked mannose residue from the non-reducing end of beta-mannosidic oligosaccharides of various complexity and length. Prefers mannobiose over mannotriose and has no activity against polymeric mannan. Is also severely restricted by galactosyl substitutions at the +1 subsite. The sequence is that of Beta-mannosidase B (mndB) from Aspergillus flavus (strain ATCC 200026 / FGSC A1120 / IAM 13836 / NRRL 3357 / JCM 12722 / SRRC 167).